We begin with the raw amino-acid sequence, 130 residues long: Cholecystokinin (130 aa).

An N-terminal signal peptide occupies residues 1 to 20 (MYSGICIYMFLAMLSTSSSG). Positions 21 to 60 (QQATGSHNENPVATELEQSLTEHHRHVRVPSSAGQLKPIQ) are excised as a propeptide. Tyr-112 bears the Sulfotyrosine mark. Phenylalanine amide is present on Phe-118. The propeptide occupies 122-130 (SAEEYEYSS). Sulfotyrosine occurs at positions 126 and 128.

The protein belongs to the gastrin/cholecystokinin family. Post-translationally, the precursor is cleaved by proteases to produce a number of active cholecystokinins. Expressed in brain, duodenum and small intestine.

It localises to the secreted. Functionally, this peptide hormone induces gall bladder contraction and the release of pancreatic enzymes in the gut. Its function in the brain is not clear. In Trachemys scripta (Red-eared slider turtle), this protein is Cholecystokinin.